The primary structure comprises 216 residues: Trimethylamine corrinoid protein 1 (216 aa).

In terms of domain architecture, B12-binding N-terminal spans 1–92 (MANKEEIIAK…EMEKRKSQTK (92 aa)). The B12-binding domain maps to 94 to 216 (LGTIVIGTIE…VVSKVKAALL (123 aa)). Position 107 (histidine 107) interacts with methylcob(III)alamin.

The protein belongs to the methylamine corrinoid protein family. As to quaternary structure, can form a complex with MttB.

Its pathway is one-carbon metabolism; methanogenesis from trimethylamine. Functionally, acts probably as a methyl group carrier between MttB and either MtbA or MtaA. The sequence is that of Trimethylamine corrinoid protein 1 (mttC1) from Methanosarcina mazei (strain ATCC BAA-159 / DSM 3647 / Goe1 / Go1 / JCM 11833 / OCM 88) (Methanosarcina frisia).